A 284-amino-acid polypeptide reads, in one-letter code: Bifunctional protein FolD 2 (284 aa).

NADP(+) contacts are provided by residues 166–168 (GAS) and I232.

Belongs to the tetrahydrofolate dehydrogenase/cyclohydrolase family. As to quaternary structure, homodimer.

It catalyses the reaction (6R)-5,10-methylene-5,6,7,8-tetrahydrofolate + NADP(+) = (6R)-5,10-methenyltetrahydrofolate + NADPH. The catalysed reaction is (6R)-5,10-methenyltetrahydrofolate + H2O = (6R)-10-formyltetrahydrofolate + H(+). The protein operates within one-carbon metabolism; tetrahydrofolate interconversion. Functionally, catalyzes the oxidation of 5,10-methylenetetrahydrofolate to 5,10-methenyltetrahydrofolate and then the hydrolysis of 5,10-methenyltetrahydrofolate to 10-formyltetrahydrofolate. This chain is Bifunctional protein FolD 2, found in Pseudomonas putida (strain ATCC 47054 / DSM 6125 / CFBP 8728 / NCIMB 11950 / KT2440).